We begin with the raw amino-acid sequence, 617 residues long: LEAF RUST 10 DISEASE-RESISTANCE LOCUS RECEPTOR-LIKE PROTEIN KINASE-like 2.4 (617 aa).

Residues 1 to 26 (MYYLPSSCLVLFLFFSLFYHLPCASS) form the signal peptide. At 27 to 243 (KQTLGWCESQ…LPTRLSSEAK (217 aa)) the chain is on the extracellular side. Asn41, Asn69, Asn86, Asn112, and Asn184 each carry an N-linked (GlcNAc...) asparagine glycan. Residues 244-264 (IATIAGVSLLPFLVLTLVVHI) form a helical membrane-spanning segment. Over 265 to 617 (IRKQKTSNDK…SEENSISSEI (353 aa)) the chain is Cytoplasmic. The 288-residue stretch at 307–594 (NSFAEVVGRG…ALEVPPRPVL (288 aa)) folds into the Protein kinase domain. ATP-binding positions include 313–321 (VGRGGFGIV) and Lys335. Tyr380 is modified (phosphotyrosine). The active-site Proton acceptor is Asp431. Thr468 and Thr471 each carry phosphothreonine.

Belongs to the protein kinase superfamily. Ser/Thr protein kinase family.

Its subcellular location is the membrane. It carries out the reaction L-seryl-[protein] + ATP = O-phospho-L-seryl-[protein] + ADP + H(+). The catalysed reaction is L-threonyl-[protein] + ATP = O-phospho-L-threonyl-[protein] + ADP + H(+). The chain is LEAF RUST 10 DISEASE-RESISTANCE LOCUS RECEPTOR-LIKE PROTEIN KINASE-like 2.4 from Arabidopsis thaliana (Mouse-ear cress).